The chain runs to 170 residues: Odorant-binding protein 2b (170 aa).

The first 15 residues, 1–15 (MKTLFLGVTLGLAAA), serve as a signal peptide directing secretion. Cysteine 74 and cysteine 166 are disulfide-bonded.

It belongs to the calycin superfamily. Lipocalin family. Strongly expressed in genital sphere organs such as the prostate and mammary glands.

Its subcellular location is the secreted. Its function is as follows. Probably binds and transports small hydrophobic volatile molecules. This Homo sapiens (Human) protein is Odorant-binding protein 2b (OBP2B).